The sequence spans 600 residues: Potassium-transporting ATPase potassium-binding subunit (600 aa).

11 helical membrane passes run 6–26, 65–85, 136–156, 179–199, 283–303, 314–334, 367–387, 419–439, 458–478, 523–543, and 566–586; these read IILL…LGTY, GYAI…YAVQ, ALSG…YALI, LYVL…QGVI, FSNL…CFTF, WAIL…VMGA, FGIS…CGAV, GLYG…LMIG, SLVI…AVVL, VMLA…VLAI, and LFIA…YVPA.

Belongs to the KdpA family. In terms of assembly, the system is composed of three essential subunits: KdpA, KdpB and KdpC.

The protein resides in the cell inner membrane. In terms of biological role, part of the high-affinity ATP-driven potassium transport (or Kdp) system, which catalyzes the hydrolysis of ATP coupled with the electrogenic transport of potassium into the cytoplasm. This subunit binds the periplasmic potassium ions and delivers the ions to the membrane domain of KdpB through an intramembrane tunnel. The protein is Potassium-transporting ATPase potassium-binding subunit of Janthinobacterium sp. (strain Marseille) (Minibacterium massiliensis).